The sequence spans 447 residues: Na(+)-translocating NADH-quinone reductase subunit A (447 aa).

This sequence belongs to the NqrA family. In terms of assembly, composed of six subunits; NqrA, NqrB, NqrC, NqrD, NqrE and NqrF.

It carries out the reaction a ubiquinone + n Na(+)(in) + NADH + H(+) = a ubiquinol + n Na(+)(out) + NAD(+). In terms of biological role, NQR complex catalyzes the reduction of ubiquinone-1 to ubiquinol by two successive reactions, coupled with the transport of Na(+) ions from the cytoplasm to the periplasm. NqrA to NqrE are probably involved in the second step, the conversion of ubisemiquinone to ubiquinol. In Klebsiella pneumoniae (strain 342), this protein is Na(+)-translocating NADH-quinone reductase subunit A.